The chain runs to 448 residues: Protein ECM7 (448 aa).

Over 1–28 (MVMSRIRDTIARPFQNLTALEKVVQWLR) the chain is Cytoplasmic. The chain crosses the membrane as a helical span at residues 29–49 (LGTTLLIISFGLALTVGPLSS). At 50 to 204 (PRTLYMSRLD…MRSLKHKKAN (155 aa)) the chain is on the extracellular side. Residues 205–225 (VLHLLYAVISFQVCMLFFMIW) form a helical membrane-spanning segment. Topologically, residues 226-246 (YYYIKGRFMNALKERALVHIN) are cytoplasmic. The chain crosses the membrane as a helical span at residues 247–267 (SLLSLVVFIGGLISSISLAWV). Residues 268-287 (NYTIQSRINTELEAFGFSYH) lie on the Extracellular side of the membrane. The helical transmembrane segment at 288 to 308 (LGVTWFALLWCFAGLISVSCL) threads the bilayer. Residues 309–448 (AWSGLEWCIS…VIKPSSALQF (140 aa)) are Cytoplasmic-facing. Composition is skewed to polar residues over residues 351-363 (YSQRYPQRQSTSG) and 383-406 (VDLNSENDANTSLDHGNPTANISN). Disordered regions lie at residues 351–411 (YSQR…GKHE) and 427–448 (RSSNDSEESMQRVIKPSSALQF).

The protein resides in the membrane. Functionally, may be involved in cell wall organization and biogenesis. This chain is Protein ECM7 (ECM7), found in Saccharomyces cerevisiae (strain ATCC 204508 / S288c) (Baker's yeast).